Reading from the N-terminus, the 316-residue chain is ATP synthase gamma chain (316 aa).

Belongs to the ATPase gamma chain family. F-type ATPases have 2 components, CF(1) - the catalytic core - and CF(0) - the membrane proton channel. CF(1) has five subunits: alpha(3), beta(3), gamma(1), delta(1), epsilon(1). CF(0) has three main subunits: a, b and c.

The protein resides in the cellular thylakoid membrane. Its function is as follows. Produces ATP from ADP in the presence of a proton gradient across the membrane. The gamma chain is believed to be important in regulating ATPase activity and the flow of protons through the CF(0) complex. The polypeptide is ATP synthase gamma chain (Prochlorococcus marinus (strain MIT 9301)).